The primary structure comprises 442 residues: SPRY domain-containing protein 3 (442 aa).

In terms of domain architecture, B30.2/SPRY spans 17-204 (DLNLHYRFLN…VRLHLNAELG (188 aa)). Residues 371–394 (EGEEEEEEEEEEEDGEEIEPEHEG) are disordered. The span at 372-390 (GEEEEEEEEEEEDGEEIEP) shows a compositional bias: acidic residues.

The chain is SPRY domain-containing protein 3 (SPRYD3) from Pongo abelii (Sumatran orangutan).